We begin with the raw amino-acid sequence, 380 residues long: Cytochrome b (380 aa).

4 consecutive transmembrane segments (helical) span residues 34–54 (FGSLLGICLITQILTGLLLAA), 78–99 (WLIRNLHANGASFFFICIYLHI), 114–134 (WNTGVTLLLTLMATAFVGYVL), and 179–199 (FFALHFLLPFMIAGLTLIHLT). Residues H84 and H98 each contribute to the heme b site. Residues H183 and H197 each contribute to the heme b site. H202 lines the a ubiquinone pocket. 4 helical membrane-spanning segments follow: residues 227 to 247 (LKDILGFAIMLLLLTTLALFS), 289 to 309 (LGGVLALAASVLILFLTPFLH), 321 to 341 (LSQLLFWLLVANLLILTWVGS), and 348 to 368 (FIIIGQMASITYFIIILVLFP).

This sequence belongs to the cytochrome b family. As to quaternary structure, the cytochrome bc1 complex contains 11 subunits: 3 respiratory subunits (MT-CYB, CYC1 and UQCRFS1), 2 core proteins (UQCRC1 and UQCRC2) and 6 low-molecular weight proteins (UQCRH/QCR6, UQCRB/QCR7, UQCRQ/QCR8, UQCR10/QCR9, UQCR11/QCR10 and a cleavage product of UQCRFS1). This cytochrome bc1 complex then forms a dimer. Heme b is required as a cofactor.

It is found in the mitochondrion inner membrane. Functionally, component of the ubiquinol-cytochrome c reductase complex (complex III or cytochrome b-c1 complex) that is part of the mitochondrial respiratory chain. The b-c1 complex mediates electron transfer from ubiquinol to cytochrome c. Contributes to the generation of a proton gradient across the mitochondrial membrane that is then used for ATP synthesis. The sequence is that of Cytochrome b (MT-CYB) from Pharomachrus antisianus (Crested quetzal).